We begin with the raw amino-acid sequence, 601 residues long: Protein FREE1 (601 aa).

The disordered stretch occupies residues 1–240 (MQQGDYNSYY…SGEYPAFEDS (240 aa)). Positions 21–35 (TPNPNPNPNPSPPAP) are enriched in pro residues. Polar residues-rich tracts occupy residues 63–79 (DYSN…QNSE) and 125–155 (LSSY…QHQT). Residues 161 to 175 (APPPSSAPAPNPNPA) are compositionally biased toward pro residues. Residues 176-197 (PYSSSLYSAPPYSSGGSSIPPS) are compositionally biased toward low complexity. Over residues 214–231 (NRSRSDLGSDLYGKRSDS) the composition is skewed to basic and acidic residues. A Phosphoserine modification is found at Ser218. The interval 338–344 (LDGLRML) is nuclear export signal. An FYVE-type zinc finger spans residues 455–515 (DEAVSKCTSC…VCDRCMAEVS (61 aa)). Residues Cys461, Cys464, Cys477, Cys480, Cys485, Cys488, Cys507, and Cys510 each coordinate Zn(2+). Residues 527 to 552 (RNVSLQSHEDLARKLQEEMERNRKSS) adopt a coiled-coil conformation. Ser530 and Ser533 each carry phosphoserine. The segment at 542–561 (QEEMERNRKSSSGLREGSGR) is disordered.

As to quaternary structure, part of the ESCRT-I complex. Interacts with VPS23A and VPS23B, but not with VPS28 or VPS37. Interacts with IRT1. Interacts with SH3P2. Interacts with SH3P3, but not with SH3P1. Interacts (via N-terminus) with PYL4 and PYR3. Interacts (via C-terminus) with SNRK2D/SNRK2.2, SNRK2I/SNRK2.3, ABF4 and ABI5. Interacts with SINAT1, SINAT2, SINAT3 and SINAT4. Interacts with SINAT5. Component of a phosphoinositide 3-kinase (PI3K) complex containing ATG6, SH3P2 and FREE1. In terms of processing, phosphorylated at Ser-530 and Ser-533 by SNRK2D/SNRK2.2 and SNRK2I/SNRK2.3 in response to abscisic acid (ABA). Phosphorylation is necessary for ABA-induced FREE1 nuclear import. Post-translationally, ubiquitinated by SINAT1, SINAT2, SINAT3 and SINAT4 for subsequent proteasomal degradation. As to expression, ubiquitous. Lowest expression in mature seeds.

It localises to the cytoplasm. The protein resides in the prevacuolar compartment membrane. The protein localises to the late endosome. It is found in the endosome. Its subcellular location is the multivesicular body. It localises to the nucleus. Functionally, endosomal sorting complex required for transport (ESCRT) component regulating multivesicular body (MVB) protein sorting and plant growth. Required for the formation of intra-luminal vesicles (ILVs)in MVBs. Binds to phosphatidylinositol-3-phosphate (PI3P) and ubiquitin. Controls IRT1 recycling to the plasma membrane and impacts the polar delivery of this transporter to the outer plasma membrane domain. Regulates ubiquitin-dependent membrane protein degradation, vacuolar transport, autophagy, and vacuole biogenesis. ESCRT component that binds ubiquitin and regulates vacuolar sorting of proteins. Attenuates abscisic acid (ABA) signaling through RSL1-triggered degradation of the ABA receptors PYR1 and PYL4. Interacts with PYL4 and PYR1, and delivers the ubiquitinated ABA receptors as cargo to the vacuolar degradation pathway. In response to ABA, is phosphorylated by SnRK2 kinases which mediate FREE1 nuclear import. In the nucleus, interacts with the ABA-responsive transcription factors ABF4 and ABI5 to reduce their ability to bind to their cis-regulatory sequences of downstream genes, thus leading to transcriptional inhibition of ABA signaling pathway. Negatively regulates salt stress tolerance via a negative feedback loop involving ABA signaling pathway. In Arabidopsis thaliana (Mouse-ear cress), this protein is Protein FREE1.